Here is a 352-residue protein sequence, read N- to C-terminus: Photosystem II D2 protein (352 aa).

Residues Cys-40 to Thr-60 traverse the membrane as a helical segment. His-117 is a chlorophyll a binding site. Residues Gly-124–Pro-140 form a helical membrane-spanning segment. 2 residues coordinate pheophytin a: Gln-129 and Asn-142. The chain crosses the membrane as a helical span at residues Val-152 to Ser-165. His-197 is a binding site for chlorophyll a. A helical transmembrane segment spans residues Gly-207–Asp-227. His-214 and Phe-261 together coordinate a plastoquinone. His-214 serves as a coordination point for Fe cation. His-268 provides a ligand contact to Fe cation. Residues Gly-278–Arg-294 traverse the membrane as a helical segment.

It belongs to the reaction center PufL/M/PsbA/D family. As to quaternary structure, PSII is composed of 1 copy each of membrane proteins PsbA, PsbB, PsbC, PsbD, PsbE, PsbF, PsbH, PsbI, PsbJ, PsbK, PsbL, PsbM, PsbT, PsbX, PsbY, PsbZ, Psb30/Ycf12, peripheral proteins PsbO, CyanoQ (PsbQ), PsbU, PsbV and a large number of cofactors. It forms dimeric complexes. The D1/D2 heterodimer binds P680, chlorophylls that are the primary electron donor of PSII, and subsequent electron acceptors. It shares a non-heme iron and each subunit binds pheophytin, quinone, additional chlorophylls, carotenoids and lipids. There is also a Cl(-1) ion associated with D1 and D2, which is required for oxygen evolution. The PSII complex binds additional chlorophylls, carotenoids and specific lipids. is required as a cofactor.

Its subcellular location is the cellular thylakoid membrane. The enzyme catalyses 2 a plastoquinone + 4 hnu + 2 H2O = 2 a plastoquinol + O2. Its function is as follows. Photosystem II (PSII) is a light-driven water:plastoquinone oxidoreductase that uses light energy to abstract electrons from H(2)O, generating O(2) and a proton gradient subsequently used for ATP formation. It consists of a core antenna complex that captures photons, and an electron transfer chain that converts photonic excitation into a charge separation. The D1/D2 (PsbA/PsbD) reaction center heterodimer binds P680, the primary electron donor of PSII as well as several subsequent electron acceptors. D2 is needed for assembly of a stable PSII complex. This is Photosystem II D2 protein from Picosynechococcus sp. (strain ATCC 27264 / PCC 7002 / PR-6) (Agmenellum quadruplicatum).